Here is a 473-residue protein sequence, read N- to C-terminus: GTPase Der (473 aa).

EngA-type G domains are found at residues 3-167 (FKVA…KGLE) and 203-378 (LRVA…TFWN). GTP contacts are provided by residues 9 to 16 (GRPNVGKS), 56 to 60 (DTAGL), 119 to 122 (NKCE), 209 to 216 (GRPNVGKS), 256 to 260 (DTAGM), and 321 to 324 (NKWD). In terms of domain architecture, KH-like spans 379 to 463 (ARVPTARLNR…PIRLFMRKTH (85 aa)).

The protein belongs to the TRAFAC class TrmE-Era-EngA-EngB-Septin-like GTPase superfamily. EngA (Der) GTPase family. In terms of assembly, associates with the 50S ribosomal subunit.

Functionally, GTPase that plays an essential role in the late steps of ribosome biogenesis. The chain is GTPase Der from Parvibaculum lavamentivorans (strain DS-1 / DSM 13023 / NCIMB 13966).